The chain runs to 295 residues: GTPase Era (295 aa).

The 170-residue stretch at 7 to 176 folds into the Era-type G domain; it reads KTVSVCIIGR…ITSKAKIAPW (170 aa). The G1 stretch occupies residues 15–22; it reads GRPNSGKS. Residue 15-22 participates in GTP binding; it reads GRPNSGKS. Residues 41-45 are G2; the sequence is QTTRS. A G3 region spans residues 62-65; that stretch reads DTPG. Residues 62 to 66 and 124 to 127 contribute to the GTP site; these read DTPGI and NKID. The interval 124–127 is G4; the sequence is NKID. The interval 152–154 is G5; the sequence is ISA. The region spanning 204-281 is the KH type-2 domain; the sequence is LQQELPYKLT…HLFLFVKVQE (78 aa).

It belongs to the TRAFAC class TrmE-Era-EngA-EngB-Septin-like GTPase superfamily. Era GTPase family. Monomer.

It localises to the cytoplasm. The protein resides in the cell inner membrane. An essential GTPase that binds both GDP and GTP, with rapid nucleotide exchange. Plays a role in 16S rRNA processing and 30S ribosomal subunit biogenesis and possibly also in cell cycle regulation and energy metabolism. The chain is GTPase Era from Rickettsia bellii (strain RML369-C).